We begin with the raw amino-acid sequence, 89 residues long: Small ribosomal subunit protein uS15 (89 aa).

This sequence belongs to the universal ribosomal protein uS15 family. As to quaternary structure, part of the 30S ribosomal subunit. Forms a bridge to the 50S subunit in the 70S ribosome, contacting the 23S rRNA.

Its function is as follows. One of the primary rRNA binding proteins, it binds directly to 16S rRNA where it helps nucleate assembly of the platform of the 30S subunit by binding and bridging several RNA helices of the 16S rRNA. In terms of biological role, forms an intersubunit bridge (bridge B4) with the 23S rRNA of the 50S subunit in the ribosome. The sequence is that of Small ribosomal subunit protein uS15 from Desulfatibacillum aliphaticivorans.